The primary structure comprises 280 residues: Monoacylglycerol lipase (280 aa).

Residue Ser-111 is the Nucleophile of the active site. Active-site charge relay system residues include Asp-227 and His-257.

The protein belongs to the AB hydrolase superfamily.

It is found in the secreted. Its subcellular location is the cell wall. The catalysed reaction is Hydrolyzes glycerol monoesters of long-chain fatty acids.. Its function is as follows. Contributes to cell growth, probably by hydrolyzing exogenous lipids. Catalyzes the hydrolysis of monoacylglycerols (MAG) with fatty acid chains ranging from C14 to C18, with a maximum activity on monoolein. Is unable to hydrolyze long-chain diacylglycerol (DAG). The protein is Monoacylglycerol lipase of Mycolicibacterium smegmatis (strain ATCC 700084 / mc(2)155) (Mycobacterium smegmatis).